The following is a 393-amino-acid chain: UPF0496 protein At2g18630 (393 aa).

The segment at 1–20 (MMGGKSSKSKKNVEFGSPST) is disordered. Positions 149–222 (VNQFEEENED…RLRNIKTWRR (74 aa)) form a coiled coil. 2 helical membrane-spanning segments follow: residues 226–246 (MVFV…AAVA) and 249–269 (PVVA…GKWC). Residues 299–356 (KEMDNISILVRKVEVEIESLLKKAEFAITEEKEVRLAIDEIKKKLDVFTETIEELGEH) are a coiled coil.

The protein belongs to the UPF0496 family.

It localises to the membrane. The polypeptide is UPF0496 protein At2g18630 (Arabidopsis thaliana (Mouse-ear cress)).